The sequence spans 123 residues: Small ribosomal subunit protein uS12 (123 aa).

The residue at position 89 (aspartate 89) is a 3-methylthioaspartic acid.

The protein belongs to the universal ribosomal protein uS12 family. In terms of assembly, part of the 30S ribosomal subunit. Contacts proteins S8 and S17. May interact with IF1 in the 30S initiation complex.

Its function is as follows. With S4 and S5 plays an important role in translational accuracy. Functionally, interacts with and stabilizes bases of the 16S rRNA that are involved in tRNA selection in the A site and with the mRNA backbone. Located at the interface of the 30S and 50S subunits, it traverses the body of the 30S subunit contacting proteins on the other side and probably holding the rRNA structure together. The combined cluster of proteins S8, S12 and S17 appears to hold together the shoulder and platform of the 30S subunit. The chain is Small ribosomal subunit protein uS12 from Phenylobacterium zucineum (strain HLK1).